The primary structure comprises 431 residues: Enolase (431 aa).

Gln164 is a binding site for (2R)-2-phosphoglycerate. Glu206 acts as the Proton donor in catalysis. 3 residues coordinate Mg(2+): Asp243, Glu286, and Asp313. Residues Lys338, Arg367, Ser368, and Lys389 each contribute to the (2R)-2-phosphoglycerate site. Lys338 (proton acceptor) is an active-site residue.

This sequence belongs to the enolase family. Mg(2+) is required as a cofactor.

It is found in the cytoplasm. The protein localises to the secreted. The protein resides in the cell surface. The enzyme catalyses (2R)-2-phosphoglycerate = phosphoenolpyruvate + H2O. It functions in the pathway carbohydrate degradation; glycolysis; pyruvate from D-glyceraldehyde 3-phosphate: step 4/5. Its function is as follows. Catalyzes the reversible conversion of 2-phosphoglycerate (2-PG) into phosphoenolpyruvate (PEP). It is essential for the degradation of carbohydrates via glycolysis. The chain is Enolase from Chloroflexus aggregans (strain MD-66 / DSM 9485).